A 45-amino-acid chain; its full sequence is Photosystem II reaction center protein K (45 aa).

A propeptide spanning residues 1-8 is cleaved from the precursor; the sequence is MNSALFLA. The helical transmembrane segment at 23-43 threads the bilayer; sequence ILPVIPVFFLLLAFVWQAAIG.

The protein belongs to the PsbK family. As to quaternary structure, PSII is composed of 1 copy each of membrane proteins PsbA, PsbB, PsbC, PsbD, PsbE, PsbF, PsbH, PsbI, PsbJ, PsbK, PsbL, PsbM, PsbT, PsbX, PsbY, PsbZ, Psb30/Ycf12, at least 3 peripheral proteins of the oxygen-evolving complex and a large number of cofactors. It forms dimeric complexes.

The protein localises to the plastid. Its subcellular location is the chloroplast thylakoid membrane. One of the components of the core complex of photosystem II (PSII). PSII is a light-driven water:plastoquinone oxidoreductase that uses light energy to abstract electrons from H(2)O, generating O(2) and a proton gradient subsequently used for ATP formation. It consists of a core antenna complex that captures photons, and an electron transfer chain that converts photonic excitation into a charge separation. The sequence is that of Photosystem II reaction center protein K from Porphyra purpurea (Red seaweed).